The following is a 142-amino-acid chain: Cytochrome c-type biogenesis protein CcmE (142 aa).

The Cytoplasmic portion of the chain corresponds to 1 to 2 (MK). Residues 3–23 (GKYLLGILVILGALGYMVFGG) traverse the membrane as a helical; Signal-anchor for type II membrane protein segment. Topologically, residues 24-142 (LGRNLVYFLT…EVRKLIEEAQ (119 aa)) are periplasmic. Heme contacts are provided by His118 and Tyr122.

The protein belongs to the CcmE/CycJ family.

The protein localises to the cell inner membrane. In terms of biological role, heme chaperone required for the biogenesis of c-type cytochromes. Transiently binds heme delivered by CcmC and transfers the heme to apo-cytochromes in a process facilitated by CcmF and CcmH. The protein is Cytochrome c-type biogenesis protein CcmE of Thermus thermophilus (strain ATCC 27634 / DSM 579 / HB8).